Reading from the N-terminus, the 186-residue chain is Cysteine protease inhibitor 10 (186 aa).

The first 7 residues, 1 to 7, serve as a signal peptide directing secretion; sequence TCHDDDN. Disulfide bonds link C49-C101 and C149-C155.

This sequence belongs to the protease inhibitor I3 (leguminous Kunitz-type inhibitor) family.

The protein resides in the vacuole. Its function is as follows. Probable inhibitor of cysteine proteases. May protect the plant by inhibiting proteases of invading organisms. This chain is Cysteine protease inhibitor 10, found in Solanum tuberosum (Potato).